Consider the following 416-residue polypeptide: Serine/threonine transporter SstT (416 aa).

The next 9 membrane-spanning stretches (helical) occupy residues 15-35 (SLVS…MFMP), 49-69 (VGAL…AAII), 82-102 (ILLL…VASF), 141-161 (ALLD…GIAM), 192-212 (LGIL…ALFG), 217-237 (LVVL…LIVF), 288-308 (VSIP…ITVL), 316-336 (LGME…TISA), and 363-383 (IAMQ…SAET).

Belongs to the dicarboxylate/amino acid:cation symporter (DAACS) (TC 2.A.23) family.

It is found in the cell inner membrane. The catalysed reaction is L-serine(in) + Na(+)(in) = L-serine(out) + Na(+)(out). It carries out the reaction L-threonine(in) + Na(+)(in) = L-threonine(out) + Na(+)(out). In terms of biological role, involved in the import of serine and threonine into the cell, with the concomitant import of sodium (symport system). In Aeromonas hydrophila subsp. hydrophila (strain ATCC 7966 / DSM 30187 / BCRC 13018 / CCUG 14551 / JCM 1027 / KCTC 2358 / NCIMB 9240 / NCTC 8049), this protein is Serine/threonine transporter SstT.